The primary structure comprises 88 residues: Insertion element ISR1 uncharacterized 10 kDa protein A3 (88 aa).

This sequence belongs to the transposase 8 family.

In Rhizobium sp, this protein is Insertion element ISR1 uncharacterized 10 kDa protein A3.